Reading from the N-terminus, the 1077-residue chain is ATP-dependent helicase/deoxyribonuclease subunit B (1077 aa).

It belongs to the helicase family. AddB/RexB type 2 subfamily. As to quaternary structure, heterodimer of AddA and RexB. The cofactor is Mg(2+).

In terms of biological role, the heterodimer acts as both an ATP-dependent DNA helicase and an ATP-dependent, dual-direction single-stranded exonuclease. Recognizes the chi site generating a DNA molecule suitable for the initiation of homologous recombination. This subunit has 5' -&gt; 3' nuclease activity but not helicase activity. In Streptococcus agalactiae serotype III (strain NEM316), this protein is ATP-dependent helicase/deoxyribonuclease subunit B.